Reading from the N-terminus, the 399-residue chain is Salivary protein Tsal1 (399 aa).

Positions 1-22 (MALKLVYGVFTLALLGISSVNA) are cleaved as a signal peptide. The N-linked (GlcNAc...) asparagine glycan is linked to asparagine 268.

The protein belongs to the DNA/RNA non-specific endonuclease family. Requires a divalent metal cation as cofactor. In terms of tissue distribution, saliva (at protein level).

Its subcellular location is the secreted. Binds double-stranded DNA (dsDNA) with high affinity. Binds double-stranded RNA. Binds single-stranded DNA with lower affinity and with a preference for purine-rich sequences. Shows residual nuclease activity for dsDNA. May facilitate blood meal intake by lowering the local viscosity created by the release of host DNA. The sequence is that of Salivary protein Tsal1 from Glossina morsitans morsitans (Savannah tsetse fly).